Here is a 158-residue protein sequence, read N- to C-terminus: C-type lectin BML-1 (158 aa).

The N-terminal stretch at 1-23 (MGHFTFTGLCLLAMFLSLRGAEC) is a signal peptide. Intrachain disulfides connect Cys26-Cys37, Cys54-Cys154, Cys61-Cys156, and Cys129-Cys146. The 123-residue stretch at 33–155 (KNGLCYKVFS…CAALRPFLCQ (123 aa)) folds into the C-type lectin domain. The Ca(2+) site is built by Gln119, Asp121, and Glu127. Residues 119-121 (QPD) carry the Galactose-binding motif. N-linked (GlcNAc...) asparagine glycosylation occurs at Asn134. Positions 142 and 143 each coordinate Ca(2+).

Belongs to the true venom lectin family. As to quaternary structure, homodimer; non-covalently linked. Expressed by the venom gland.

It is found in the secreted. Its function is as follows. Recombinant C-type lectin BML-1 is able to agglutinate erythrocytes. May be a calcium-dependent lectin. In Bungarus multicinctus (Many-banded krait), this protein is C-type lectin BML-1.